Here is a 2145-residue protein sequence, read N- to C-terminus: Adenylate cyclase (2145 aa).

4 disordered regions span residues 1–115, 127–236, 266–307, and 329–547; these read MPRN…RMSD, DPAG…SGAR, GKEH…PVPK, and VRDI…GPTD. Low complexity-rich tracts occupy residues 7 to 23, 35 to 68, and 89 to 107; these read SSRFSSMTGSSTDSARS, PSASSSSPFAASSNQTSNASRSASHGSRRAAPSR, and SPTSTSPCVSPSSITSSNS. Composition is skewed to polar residues over residues 134–148 and 159–205; these read SRTQQNNPSSGSLSQ and PASS…TESP. Residues 217–234 are compositionally biased toward low complexity; it reads SIASITTTASSQGSRASG. Residues 269–281 show a composition bias toward basic residues; the sequence is HRSHSYSHARPHR. The span at 343-357 shows a compositional bias: polar residues; that stretch reads NDSSQQNNPPKTSGS. Over residues 377–403 the composition is skewed to basic and acidic residues; the sequence is KSNEDPRSLRPTVSREDSTISVPKDRN. Over residues 404 to 441 the composition is skewed to polar residues; that stretch reads GSSTMYGTRSRAQSPAPSTTGSYWGHKSGSTDGQTSPG. Composition is skewed to basic and acidic residues over residues 454 to 466 and 495 to 511; these read RLKEKDDAPDLKK and ADGKYQPDVRDGIRPDL. Residues 637 to 727 form the Ras-associating domain; sequence HNYCIRVFRA…IEDIGREDNS (91 aa). LRR repeat units follow at residues 779–800, 803–824, 826–847, 850–871, 873–894, 896–917, 919–941, 943–964, 965–986, 987–1006, 1007–1028, 1030–1051, 1053–1074, 1076–1097, and 1099–1120; these read EIISLNLSRNLSLQVPRDFISV, NLRDIKFNNNEARALPKSFGYA, RLTMLDASNNRLESLESAALHN, GLLKLNLANNKLKQLPREFEAF, VLRTLNISSNLLNNFPPFLAKL, NLVDLDLSFNTIQSLPDNVGQM, SLERLVITNNELSGSLPPSFKNL, SLRELDIKYNAISNIDVISQLP, KLEILSATRNNISQFSGTFERV, RSIKLNWNPITKFEIKAPVP, TLKALNLSNAQLASIDESFHNM, NLERLELDKNYFVSLPAHIGNL, RLEYFSIAHNSVGELPPEIGCL, ELKRLDVRGNNIRKLPMELWWA, and KLDYLNASSNVLENFPKPASRA. Positions 1114-1226 are disordered; the sequence is PKPASRAPHP…SSRKDSSHTQ (113 aa). Composition is skewed to low complexity over residues 1160–1179 and 1201–1217; these read RPSQASSSLLSVGPSPVPGG and SRSTTQSSTALATPTAS. LRR repeat units follow at residues 1235–1255, 1259–1280, 1283–1304, 1307–1328, 1330–1352, and 1359–1380; these read SLRYLYMADNQLDDDCFDQLC, NLRVLNLSYNDLSDMPQRSIKS, QLVELYLSGNELASLPADDLEE, MLQTLHINGNKFTNLPADISRA, KLTVFDCGSNSLKYNIANVPYDW, and NLRYLNLSGNRRLEIKQSSVPT. Residues 1432-1709 form the PPM-type phosphatase domain; it reads PYGMADTLGS…NKMTVQMLGV (278 aa). The disordered stretch occupies residues 1718–1760; that stretch reads RSRQHKGQSMPVYASLQDDGGSSTGMRRARKARDGPLDSTLGR. A Guanylate cyclase domain is found at 1773–1910; sequence AIVFTDIKNS…PMVNKASRIS (138 aa). Asp1778 and Asp1821 together coordinate Mg(2+).

It belongs to the adenylyl cyclase class-3 family. The cofactor is Mg(2+).

It carries out the reaction ATP = 3',5'-cyclic AMP + diphosphate. Plays essential roles in regulation of cellular metabolism by catalyzing the synthesis of a second messenger, cAMP. This is Adenylate cyclase from Podospora anserina (Pleurage anserina).